The primary structure comprises 308 residues: Mitochondrial brown fat uncoupling protein 1 (308 aa).

The Mitochondrial intermembrane portion of the chain corresponds to 1-10 (MVASAEADVP). Residues 11 to 33 (PPTMLVKIASAGLSACLADIITF) traverse the membrane as a helical segment. Solcar repeat units lie at residues 11-103 (PPTM…VQEY), 112-202 (ATLG…LKEA), and 211-296 (DDIP…LKKE). Residues 34–74 (PLDTAKVRLQVQGERPNAPGVKYKGVLGTIATVAKTEGPLK) are Mitochondrial matrix-facing. Lysine 57 contacts fatty acid 16:0. The chain crosses the membrane as a helical span at residues 75–97 (LYGGLPAGIQRQISFASLRIGLY). At 98–117 (DTVQEYFNAHRKTPATLGNK) the chain is on the mitochondrial intermembrane side. Residues 118–134 (ISAGLMTGCVTVFIGQP) traverse the membrane as a helical segment. The Mitochondrial matrix portion of the chain corresponds to 135–179 (TEVAKVRMQAQSSLHWLKPRYSGTYNAYYVIVKTEGFLGLWKGTS). Residues 180–196 (LNLTRNVIINCTELVVY) traverse the membrane as a helical segment. The Mitochondrial intermembrane segment spans residues 197 to 213 (DVLKEALVKNNVLADDI). A helical transmembrane segment spans residues 214-233 (PCHLLAALTAGFCTTALASP). Residues 234-267 (VDVVKTRFINSPPGYYPHVHNCALNMLQKEGLRA) lie on the Mitochondrial matrix side of the membrane. Residue cysteine 255 is modified to Cysteine sulfenic acid (-SOH). The chain crosses the membrane as a helical span at residues 268-290 (FFKGFVPSFLRLGSWTVIMHVTF). Lysine 270 lines the fatty acid 16:0 pocket. Over 291 to 308 (EQLKKELMKSRQTVDCAT) the chain is Mitochondrial intermembrane.

The protein belongs to the mitochondrial carrier (TC 2.A.29) family. In terms of assembly, most probably functions as a monomer. Binds one purine nucleotide per monomer. However, has also been suggested to function as a homodimer or a homotetramer. Tightly associates with cardiolipin in the mitochondrion inner membrane; may stabilize and regulate its activity. In terms of processing, may undergo sulfenylation upon cold exposure. May increase the sensitivity of UCP1 thermogenic function to the activation by noradrenaline probably through structural effects. May undergo ubiquitin-mediated proteasomal degradation. In terms of tissue distribution, brown adipose tissue.

It is found in the mitochondrion inner membrane. It catalyses the reaction H(+)(in) = H(+)(out). With respect to regulation, has no constitutive proton transporter activity and has to be activated by long-chain fatty acids/LCFAs. Inhibited by purine nucleotides. Both purine nucleotides and LCFAs bind the cytosolic side of the transporter and directly compete to activate or inhibit it. Activated by noradrenaline and reactive oxygen species. Despite lacking canonical translational encoding for selenocysteine, a small pool of the protein has been observed to selectively incorporate selenocysteine at 'Cys-255'. Selenocysteine-modified protein is highly sensitive to redox modification and may constitute a pool of protein highly sensitive to activation by elevated levels of reactive oxygen species (ROS). Its function is as follows. Mitochondrial protein responsible for thermogenic respiration, a specialized capacity of brown adipose tissue and beige fat that participates in non-shivering adaptive thermogenesis to temperature and diet variations and more generally to the regulation of energy balance. Functions as a long-chain fatty acid/LCFA and proton symporter, simultaneously transporting one LCFA and one proton through the inner mitochondrial membrane. However, LCFAs remaining associated with the transporter via their hydrophobic tails, it results in an apparent transport of protons activated by LCFAs. Thereby, dissipates the mitochondrial proton gradient and converts the energy of substrate oxydation into heat instead of ATP. Regulates the production of reactive oxygen species/ROS by mitochondria. This is Mitochondrial brown fat uncoupling protein 1 from Suncus murinus (Asian house shrew).